The following is a 107-amino-acid chain: Nucleoid-associated protein PHZ_c0369 (107 aa).

Belongs to the YbaB/EbfC family. Homodimer.

It is found in the cytoplasm. Its subcellular location is the nucleoid. In terms of biological role, binds to DNA and alters its conformation. May be involved in regulation of gene expression, nucleoid organization and DNA protection. In Phenylobacterium zucineum (strain HLK1), this protein is Nucleoid-associated protein PHZ_c0369.